The chain runs to 230 residues: Heptaprenylglyceryl phosphate synthase (230 aa).

Residue lysine 12 coordinates sn-glycerol 1-phosphate. Positions 14 and 40 each coordinate Mg(2+). Residues 159 to 164 (YIEYSG), glycine 189, and 209 to 210 (GD) each bind sn-glycerol 1-phosphate.

It belongs to the GGGP/HepGP synthase family. Group I subfamily. In terms of assembly, homodimer. The cofactor is Mg(2+).

The catalysed reaction is sn-glycerol 1-phosphate + all-trans-heptaprenyl diphosphate = 3-heptaprenyl-sn-glycero-1-phosphate + diphosphate. The protein operates within membrane lipid metabolism; glycerophospholipid metabolism. In terms of biological role, prenyltransferase that catalyzes in vivo the transfer of the heptaprenyl moiety of heptaprenyl pyrophosphate (HepPP; 35 carbon atoms) to the C3 hydroxyl of sn-glycerol-1-phosphate (G1P), producing heptaprenylglyceryl phosphate (HepGP). This reaction is an ether-bond-formation step in the biosynthesis of archaea-type G1P-based membrane lipids found in Bacillales. To a much lesser extent, is also able to use geranylgeranyl diphosphate (GGPP; C20) as the prenyl donor. This is Heptaprenylglyceryl phosphate synthase from Staphylococcus aureus (strain NCTC 8325 / PS 47).